The chain runs to 170 residues: Large ribosomal subunit protein uL10 (170 aa).

This sequence belongs to the universal ribosomal protein uL10 family. Part of the ribosomal stalk of the 50S ribosomal subunit. The N-terminus interacts with L11 and the large rRNA to form the base of the stalk. The C-terminus forms an elongated spine to which L12 dimers bind in a sequential fashion forming a multimeric L10(L12)X complex.

Its function is as follows. Forms part of the ribosomal stalk, playing a central role in the interaction of the ribosome with GTP-bound translation factors. This Corynebacterium urealyticum (strain ATCC 43042 / DSM 7109) protein is Large ribosomal subunit protein uL10.